The following is a 441-amino-acid chain: G-protein coupled receptor family C group 5 member C (441 aa).

The first 23 residues, 1 to 23 (MAIHKALVMCLGLPLFLFPGAWA), serve as a signal peptide directing secretion. The Extracellular segment spans residues 24 to 50 (QGHVPPGCSQGLNPLYYNLCDRSGAWG). A helical transmembrane segment spans residues 51–71 (IVLEAVAGAGIVTTFVLTIIL). The Cytoplasmic segment spans residues 72 to 85 (VASLPFVQDTKKRS). Residues 86–106 (LLGTQVFFLLGTLGLFCLVFA) traverse the membrane as a helical segment. Topologically, residues 107–120 (CVVKPDFSTCASRR) are extracellular. A helical membrane pass occupies residues 121 to 141 (FLFGVLFAICFSCLAAHVFAL). At 142–155 (NFLARKNHGPRGWV) the chain is on the cytoplasmic side. Residues 156–176 (IFTVALLLTLVEVIINTEWLI) traverse the membrane as a helical segment. The Extracellular segment spans residues 177–208 (ITLVRGSGEGGPQGNSSAGWAVASPCAIANMD). Asparagine 191 is a glycosylation site (N-linked (GlcNAc...) asparagine). A helical membrane pass occupies residues 209 to 229 (FVMALIYVMLLLLGAFLGAWP). Topologically, residues 230–241 (ALCGRYKRWRKH) are cytoplasmic. Residues 242-262 (GVFVLLTTATSVAIWVVWIVM) form a helical membrane-spanning segment. Topologically, residues 263–279 (YTYGNKQHNSPTWDDPT) are extracellular. Residues 280–300 (LAIALAANAWAFVLFYVIPEV) form a helical membrane-spanning segment. The Cytoplasmic segment spans residues 301 to 441 (SQVTKSSPEQ…QVFRNPYVWD (141 aa)). Phosphoserine is present on residues serine 344, serine 383, serine 403, and serine 406. The tract at residues 412–441 (DMYSAQSHQAATPPKDGKNSQVFRNPYVWD) is disordered. Residue tyrosine 414 is modified to Phosphotyrosine. Threonine 423 is subject to Phosphothreonine.

It belongs to the G-protein coupled receptor 3 family. As to expression, expression is highest in the periphery, particularly in the stomach, but also in the kidney, liver, pancreas, and prostate. In brain, levels of expression are generally lower than in the periphery, with the exception of cerebellum, spinal cord, and dorsal root ganglia (DRG).

It is found in the cell membrane. Its subcellular location is the cytoplasmic vesicle membrane. Its function is as follows. This retinoic acid-inducible G-protein coupled receptor provide evidence for a possible interaction between retinoid and G-protein signaling pathways. The protein is G-protein coupled receptor family C group 5 member C (GPRC5C) of Homo sapiens (Human).